The following is a 548-amino-acid chain: Probable zinc metalloprotease EGY1, chloroplastic (548 aa).

Residues 1-18 (MGTLTSVAFAAAVNIRFR) constitute a chloroplast transit peptide. The segment covering 61 to 76 (NSNRDDSIGENGETHK) has biased composition (basic and acidic residues). Residues 61–116 (NSNRDDSIGENGETHKSSVVKTATFEEEDEETSKSSSTTSSSNEFGSDKTSMPSTI) form a disordered region. Over residues 103–116 (NEFGSDKTSMPSTI) the composition is skewed to polar residues. 8 consecutive transmembrane segments (helical) span residues 242-262 (YVIA…LGIA), 290-310 (LYPF…ILLF), 326-346 (LSIP…ITQF), 361-381 (LAGP…GLFL), 388-408 (ANDL…LGLI), 416-436 (AALH…WCGL), 474-494 (MLGL…YVLI), and 516-536 (ALVG…WDEL).

The protein belongs to the peptidase M50B family. In terms of tissue distribution, expressed in roots, leaves, cotyledons, hypocotyls, stems, flowers and siliques.

The protein localises to the plastid. Its subcellular location is the chloroplast membrane. Its function is as follows. Membrane-associated and ATP-independent metalloprotease required for development of both thylakoid grana and well-organized lamellae in chloroplast. Required for the accumulation of chlorophyll and chlorophyll a/b binding (CAB) proteins (from both PS I and PS II) in chloroplast membranes, and for grana formation and normal chloroplast development. Involved in the regulation of nuclear gene expression in response to ammonium stress and interacts with ABA signaling. Carries out beta-casein degradation in an ATP-independent manner in vitro. The polypeptide is Probable zinc metalloprotease EGY1, chloroplastic (EGY1) (Arabidopsis thaliana (Mouse-ear cress)).